Here is a 1087-residue protein sequence, read N- to C-terminus: Kinesin-like protein KIN-14F (1087 aa).

The region spanning 1–110 (MDQGAMETLP…CILCLKGFYE (110 aa)) is the Calponin-homology (CH) domain. The segment at 136 to 155 (SSPPQYGIGSESTTDESVSL) is disordered. Residues 377–705 (TIRVYCRVRP…LKFAQRVASI (329 aa)) enclose the Kinesin motor domain. 461-468 (GQTGSGKT) is an ATP binding site. Residues 710–749 (ARSNKETGEIRDLKDEISSLKSAMEKKEAELEQLRSGSIR) adopt a coiled-coil conformation. Disordered regions lie at residues 740–858 (LEQL…PVSR), 923–949 (QGGVKKTRAESSKAKAKQPSPARFQKL), and 1004–1087 (DSTL…FMVP). Composition is skewed to polar residues over residues 744–754 (RSGSIRNTTEC), 780–797 (PQPNDGTRSYETRSCSTG), and 836–856 (TDRASTIKSRNKPDVTQNLPV). The segment covering 1017-1033 (EPPSKSKNAQRNSSKNS) has biased composition (polar residues). The span at 1042–1054 (YAHEDTSLVDDKP) shows a compositional bias: basic and acidic residues. The segment covering 1076-1087 (SRSTHHARFMVP) has biased composition (basic residues).

It belongs to the TRAFAC class myosin-kinesin ATPase superfamily. Kinesin family. KIN-14 subfamily. Interacts (via C-terminus) with VDAC3. In terms of tissue distribution, expressed in roots, leaves, stems and flowers (at protein level).

It is found in the cytoplasm. It localises to the cytoskeleton. The protein resides in the mitochondrion. Functionally, required for keeping the ATP levels stable and balancing the aerobic respiration pathways during seed germination at low temperature. This Arabidopsis thaliana (Mouse-ear cress) protein is Kinesin-like protein KIN-14F.